A 324-amino-acid polypeptide reads, in one-letter code: tRNA dimethylallyltransferase (324 aa).

17 to 24 (GPTASGKT) contacts ATP. 19–24 (TASGKT) is a binding site for substrate. Interaction with substrate tRNA regions lie at residues 42-45 (DSAL), 166-170 (QRIQR), and 251-256 (RCVGYR).

It belongs to the IPP transferase family. In terms of assembly, monomer. The cofactor is Mg(2+).

The enzyme catalyses adenosine(37) in tRNA + dimethylallyl diphosphate = N(6)-dimethylallyladenosine(37) in tRNA + diphosphate. Functionally, catalyzes the transfer of a dimethylallyl group onto the adenine at position 37 in tRNAs that read codons beginning with uridine, leading to the formation of N6-(dimethylallyl)adenosine (i(6)A). In Burkholderia mallei (strain NCTC 10247), this protein is tRNA dimethylallyltransferase.